The chain runs to 46 residues: Small, acid-soluble spore protein N (46 aa).

The disordered stretch occupies residues 1–46 (MAKMKHGSAQFRPDHLGTQPRKSDANKGKKMNTKGNENPQYIPPKG).

It belongs to the SspN family.

It localises to the spore core. The protein is Small, acid-soluble spore protein N of Halalkalibacterium halodurans (strain ATCC BAA-125 / DSM 18197 / FERM 7344 / JCM 9153 / C-125) (Bacillus halodurans).